The sequence spans 25 residues: C-reactive protein P2 subunit 4 (25 aa).

The 25-residue stretch at 1 to 25 (GRSLVFPEETANSFVELFPAKELSL) folds into the Pentraxin (PTX) domain.

The protein belongs to the pentraxin family. As to quaternary structure, heteropentamer. Discoid arrangement of 5 non-covalently bound subunits 1, 2, 3 and 4. Ca(2+) is required as a cofactor. In terms of processing, glycosylated.

The protein resides in the secreted. Functionally, displays several functions associated with host defense: it promotes agglutination, bacterial capsular swelling, phagocytosis, and complement fixation through its calcium-dependent binding to phosphorylcholine. This Gadus morhua (Atlantic cod) protein is C-reactive protein P2 subunit 4.